We begin with the raw amino-acid sequence, 124 residues long: Protein MGF 110-4L (124 aa).

The N-terminal stretch at 1–18 (MLVIFLGILGLLANQVLG) is a signal peptide. Asparagine 64 carries an N-linked (GlcNAc...) asparagine; by host glycan. The Prevents secretion from ER signature appears at 121–124 (KEDL).

It belongs to the asfivirus MGF 110 family.

It localises to the virion. The protein resides in the host endoplasmic reticulum-Golgi intermediate compartment. Its function is as follows. Causes the redistribution of lumenal ER protein to an enlarged ERGIC compartment. This Ornithodoros (relapsing fever ticks) protein is Protein MGF 110-4L.